A 478-amino-acid polypeptide reads, in one-letter code: Glucose-6-phosphate 1-dehydrogenase (478 aa).

NADP(+) contacts are provided by residues arginine 48, 86–87 (DF), and lysine 142. Substrate-binding residues include histidine 172, lysine 176, glutamate 210, and aspartate 229. Histidine 234 acts as the Proton acceptor in catalysis. Substrate-binding residues include lysine 334 and lysine 339.

This sequence belongs to the glucose-6-phosphate dehydrogenase family.

The catalysed reaction is D-glucose 6-phosphate + NADP(+) = 6-phospho-D-glucono-1,5-lactone + NADPH + H(+). The protein operates within carbohydrate degradation; pentose phosphate pathway; D-ribulose 5-phosphate from D-glucose 6-phosphate (oxidative stage): step 1/3. Functionally, catalyzes the oxidation of glucose 6-phosphate to 6-phosphogluconolactone. The protein is Glucose-6-phosphate 1-dehydrogenase of Borreliella burgdorferi (strain ATCC 35210 / DSM 4680 / CIP 102532 / B31) (Borrelia burgdorferi).